We begin with the raw amino-acid sequence, 232 residues long: Phosphatidylserine decarboxylase proenzyme (232 aa).

S190 serves as the catalytic Schiff-base intermediate with substrate; via pyruvic acid. S190 is modified (pyruvic acid (Ser); by autocatalysis).

It belongs to the phosphatidylserine decarboxylase family. PSD-A subfamily. As to quaternary structure, heterodimer of a large membrane-associated beta subunit and a small pyruvoyl-containing alpha subunit. Pyruvate serves as cofactor. In terms of processing, is synthesized initially as an inactive proenzyme. Formation of the active enzyme involves a self-maturation process in which the active site pyruvoyl group is generated from an internal serine residue via an autocatalytic post-translational modification. Two non-identical subunits are generated from the proenzyme in this reaction, and the pyruvate is formed at the N-terminus of the alpha chain, which is derived from the carboxyl end of the proenzyme. The post-translation cleavage follows an unusual pathway, termed non-hydrolytic serinolysis, in which the side chain hydroxyl group of the serine supplies its oxygen atom to form the C-terminus of the beta chain, while the remainder of the serine residue undergoes an oxidative deamination to produce ammonia and the pyruvoyl prosthetic group on the alpha chain.

The protein resides in the cell membrane. It carries out the reaction a 1,2-diacyl-sn-glycero-3-phospho-L-serine + H(+) = a 1,2-diacyl-sn-glycero-3-phosphoethanolamine + CO2. It participates in phospholipid metabolism; phosphatidylethanolamine biosynthesis; phosphatidylethanolamine from CDP-diacylglycerol: step 2/2. Catalyzes the formation of phosphatidylethanolamine (PtdEtn) from phosphatidylserine (PtdSer). The sequence is that of Phosphatidylserine decarboxylase proenzyme from Rhizobium johnstonii (strain DSM 114642 / LMG 32736 / 3841) (Rhizobium leguminosarum bv. viciae).